The chain runs to 575 residues: Putative export ATP-binding/permease protein RBE_0492 (575 aa).

Positions leucine 20–leucine 303 constitute an ABC transmembrane type-1 domain. 6 helical membrane-spanning segments follow: residues isoleucine 21 to phenylalanine 41, isoleucine 61 to phenylalanine 81, phenylalanine 135 to phenylalanine 155, phenylalanine 158 to phenylalanine 178, alanine 242 to isoleucine 262, and isoleucine 277 to leucine 297. An ABC transporter domain is found at leucine 336–glutamate 571. Glycine 371–serine 378 is an ATP binding site.

The protein belongs to the ABC transporter superfamily. In terms of assembly, homodimer.

The protein localises to the cell inner membrane. Its function is as follows. Part of an ABC transporter complex. Transmembrane domains (TMD) form a pore in the inner membrane and the ATP-binding domain (NBD) is responsible for energy generation. This is Putative export ATP-binding/permease protein RBE_0492 from Rickettsia bellii (strain RML369-C).